The sequence spans 284 residues: Tropomyosin (284 aa).

The segment at 1-54 (MDAIKKKMQAMKLEKDNAMDRADTLEQQNKEANNRAEKTEEEIRATQKKMQQVE) is disordered. Residues 1 to 273 (MDAIKKKMQA…KEKYKSITDE (273 aa)) adopt a coiled-coil conformation. The span at 12–45 (KLEKDNAMDRADTLEQQNKEANNRAEKTEEEIRA) shows a compositional bias: basic and acidic residues.

Belongs to the tropomyosin family. As to quaternary structure, homodimer. In terms of tissue distribution, muscle (at protein level). Expressed in leg and chest protection muscle (at protein level). Expressed in claw muscle.

Its function is as follows. Tropomyosin, in association with the troponin complex, plays a central role in the calcium dependent regulation of muscle contraction. The polypeptide is Tropomyosin (Eriocheir sinensis (Chinese mitten crab)).